Reading from the N-terminus, the 234-residue chain is Leucyl/phenylalanyl-tRNA--protein transferase (234 aa).

Belongs to the L/F-transferase family.

The protein localises to the cytoplasm. The catalysed reaction is N-terminal L-lysyl-[protein] + L-leucyl-tRNA(Leu) = N-terminal L-leucyl-L-lysyl-[protein] + tRNA(Leu) + H(+). It carries out the reaction N-terminal L-arginyl-[protein] + L-leucyl-tRNA(Leu) = N-terminal L-leucyl-L-arginyl-[protein] + tRNA(Leu) + H(+). The enzyme catalyses L-phenylalanyl-tRNA(Phe) + an N-terminal L-alpha-aminoacyl-[protein] = an N-terminal L-phenylalanyl-L-alpha-aminoacyl-[protein] + tRNA(Phe). In terms of biological role, functions in the N-end rule pathway of protein degradation where it conjugates Leu, Phe and, less efficiently, Met from aminoacyl-tRNAs to the N-termini of proteins containing an N-terminal arginine or lysine. This is Leucyl/phenylalanyl-tRNA--protein transferase from Salmonella arizonae (strain ATCC BAA-731 / CDC346-86 / RSK2980).